The sequence spans 814 residues: Plakophilin-2 (814 aa).

The interval 1-329 is required for binding to single-stranded DNA; it reads MAIPGSLGEC…MTLERAVNML (329 aa). S44 bears the Phosphoserine mark. R46 is modified (omega-N-methylarginine). A phosphoserine mark is found at S82 and S130. 8 ARM repeats span residues 200-240, 309-352, 354-393, 503-549, 604-644, 652-691, 696-737, and 740-782; these read TCQH…SIKG, CDCL…ESFQ, SEARKRVNQLQGIPKLLQLLKVQNEDVQRAVCGALRNLVF, PDGR…NLSY, PRGI…NLTA, SVARMVVQKENGLQHTRKMLHVGDPSVKKTAVSLLRNLSR, QNEI…NLMQ, and YQNA…SLWA.

It belongs to the beta-catenin family. As to quaternary structure, interacts with DSC2. Interacts with JUP. Interacts with KRT5/CK5, KRT8/CK8, KRT14/CK14, KRT18/CK18 and VIM. Interacts (via N-terminus) with MARK3/C-TAK1. Interacts with DSP. Interacts with DSG1, DSG2 and DSG3. Interacts (via N-terminus) with CTNNB1. Interacts with CDH1. Interacts with the RNA polymerase III (Pol III) complex proteins POLR3A/RPC155, POLR3F/RPC39 and POLR3C/RPC82. Interacts with CTNNA3. Interacts (via N-terminus) with SCN5A/Nav1.5. Interacts with ANK3/ANKG and GJA1/CX43. In terms of tissue distribution, expressed in the heart (at protein level).

Its subcellular location is the nucleus. The protein resides in the cell junction. It localises to the desmosome. It is found in the cytoplasm. Functionally, a component of desmosome cell-cell junctions which are required for positive regulation of cellular adhesion. Regulates focal adhesion turnover resulting in changes in focal adhesion size, cell adhesion and cell spreading, potentially via transcriptional modulation of beta-integrins. Required to maintain gingival epithelial barrier function. Important component of the desmosome that is also required for localization of desmosome component proteins such as DSC2, DSG2 and JUP to the desmosome cell-cell junction. Required for the formation of desmosome cell junctions in cardiomyocytes, thereby required for the correct formation of the heart, specifically trabeculation and formation of the atria walls. Loss of desmosome cell junctions leads to mis-localization of DSP and DSG2 resulting in disruption of cell-cell adhesion and disordered intermediate filaments. Modulates profibrotic gene expression in cardiomyocytes via regulation of DSP expression and subsequent activation of downstream TGFB1 and MAPK14/p38 MAPK signaling. Required for cardiac sodium current propagation and electrical synchrony in cardiac myocytes, via ANK3 stabilization and modulation of SCN5A/Nav1.5 localization to cell-cell junctions. Required for mitochondrial function, nuclear envelope integrity and positive regulation of SIRT3 transcription via maintaining DES localization at its nuclear envelope and cell tip anchoring points, and thereby preserving regulation of the transcriptional program. Maintenance of nuclear envelope integrity protects against DNA damage and transcriptional dysregulation of genes, especially those involved in the electron transport chain, thereby preserving mitochondrial function and protecting against superoxide radical anion generation. Binds single-stranded DNA (ssDNA). May regulate the localization of GJA1 to gap junctions in intercalated disks of the heart. This chain is Plakophilin-2, found in Rattus norvegicus (Rat).